The sequence spans 213 residues: ATP-dependent Clp protease proteolytic subunit (213 aa).

Residue Ser114 is the Nucleophile of the active site. The active site involves His139.

The protein belongs to the peptidase S14 family. In terms of assembly, fourteen ClpP subunits assemble into 2 heptameric rings which stack back to back to give a disk-like structure with a central cavity, resembling the structure of eukaryotic proteasomes.

Its subcellular location is the cytoplasm. The catalysed reaction is Hydrolysis of proteins to small peptides in the presence of ATP and magnesium. alpha-casein is the usual test substrate. In the absence of ATP, only oligopeptides shorter than five residues are hydrolyzed (such as succinyl-Leu-Tyr-|-NHMec, and Leu-Tyr-Leu-|-Tyr-Trp, in which cleavage of the -Tyr-|-Leu- and -Tyr-|-Trp bonds also occurs).. In terms of biological role, cleaves peptides in various proteins in a process that requires ATP hydrolysis. Has a chymotrypsin-like activity. Plays a major role in the degradation of misfolded proteins. This chain is ATP-dependent Clp protease proteolytic subunit, found in Pseudomonas entomophila (strain L48).